Consider the following 259-residue polypeptide: UPF0246 protein Pfl01_0961 (259 aa).

The protein belongs to the UPF0246 family.

The protein is UPF0246 protein Pfl01_0961 of Pseudomonas fluorescens (strain Pf0-1).